The sequence spans 600 residues: NADH-quinone oxidoreductase subunit C/D (600 aa).

The tract at residues 1–190 (MVNNMTDLTA…SPFELTKAKQ (190 aa)) is NADH dehydrogenase I subunit C. The NADH dehydrogenase I subunit D stretch occupies residues 214–600 (DFMFLNLGPN…IDFVMSDVDR (387 aa)).

It in the N-terminal section; belongs to the complex I 30 kDa subunit family. The protein in the C-terminal section; belongs to the complex I 49 kDa subunit family. As to quaternary structure, NDH-1 is composed of 13 different subunits. Subunits NuoB, CD, E, F, and G constitute the peripheral sector of the complex.

It is found in the cell inner membrane. The enzyme catalyses a quinone + NADH + 5 H(+)(in) = a quinol + NAD(+) + 4 H(+)(out). NDH-1 shuttles electrons from NADH, via FMN and iron-sulfur (Fe-S) centers, to quinones in the respiratory chain. The immediate electron acceptor for the enzyme in this species is believed to be ubiquinone. Couples the redox reaction to proton translocation (for every two electrons transferred, four hydrogen ions are translocated across the cytoplasmic membrane), and thus conserves the redox energy in a proton gradient. The protein is NADH-quinone oxidoreductase subunit C/D of Escherichia coli (strain ATCC 8739 / DSM 1576 / NBRC 3972 / NCIMB 8545 / WDCM 00012 / Crooks).